The chain runs to 525 residues: C6 finger transcription factor fsqA (525 aa).

Positions 12 to 53 form a DNA-binding region, zn(2)-C6 fungal-type; that stretch reads CDRCRGQKLRCVGAGKPIPNSSSRLLRNEIPCDRCRRAKVEC. Disordered stretches follow at residues 80 to 142, 204 to 260, and 327 to 371; these read RSSS…LGDM, EWNS…EPAG, and RARS…ARSS. The segment covering 95-115 has biased composition (polar residues); that stretch reads PPNSLVTAASKPHPNSLSFNH. Over residues 327 to 337 the composition is skewed to polar residues; that stretch reads RARSQWSSLPE.

It is found in the nucleus. Transcription factor that regulates the expression of the gene cluster that mediates the biosynthesis of the isoquinoline alkaloids fumisoquin A, fumisoquin B and fumisoquin C; as well as small amounts of fumipyrrole as a shunt metabolite. The products of the cluster lead to a brown coloration and are important for growth and conidiation. The chain is C6 finger transcription factor fsqA from Aspergillus fumigatus (strain ATCC MYA-4609 / CBS 101355 / FGSC A1100 / Af293) (Neosartorya fumigata).